Consider the following 132-residue polypeptide: Agouti-signaling protein (132 aa).

Residues methionine 1–serine 22 form the signal peptide. N-linked (GlcNAc...) asparagine glycosylation occurs at asparagine 39. Positions glutamine 61–threonine 87 are disordered. Residues serine 63 to methionine 79 show a composition bias toward basic and acidic residues. 5 disulfide bridges follow: cysteine 93–cysteine 108, cysteine 100–cysteine 114, cysteine 107–cysteine 125, cysteine 111–cysteine 132, and cysteine 116–cysteine 123. In terms of domain architecture, Agouti spans cysteine 93–cysteine 132.

It localises to the secreted. Its function is as follows. Involved in the regulation of melanogenesis. The binding of ASP to MC1R precludes alpha-MSH initiated signaling and thus blocks production of cAMP, leading to a down-regulation of eumelanogenesis (brown/black pigment) and thus increasing synthesis of pheomelanin (yellow/red pigment). In Macaca hecki (Heck's macaque), this protein is Agouti-signaling protein (ASIP).